Here is a 254-residue protein sequence, read N- to C-terminus: Phosphomannomutase (254 aa).

The active-site Nucleophile is the Asp-19. Mg(2+) is bound by residues Asp-19 and Asp-21. The Proton donor/acceptor role is filled by Asp-21. Residues Arg-28, Arg-130, Arg-141, Arg-148, Ser-186, and Asp-188 each contribute to the alpha-D-mannose 1-phosphate site. Residues Asp-216, Phe-228, Asp-230, and Thr-233 each contribute to the Mg(2+) site. Ser-240 is subject to Phosphoserine.

The protein belongs to the eukaryotic PMM family. Homodimer.

Its subcellular location is the cytoplasm. The catalysed reaction is alpha-D-mannose 1-phosphate = D-mannose 6-phosphate. It functions in the pathway nucleotide-sugar biosynthesis; GDP-alpha-D-mannose biosynthesis; alpha-D-mannose 1-phosphate from D-fructose 6-phosphate: step 2/2. Involved in the synthesis of the GDP-mannose and dolichol-phosphate-mannose required for a number of critical mannosyl transfer reactions such as folding and glycosylation of secretory proteins in the ER lumen. This Saccharomyces cerevisiae (strain ATCC 204508 / S288c) (Baker's yeast) protein is Phosphomannomutase.